Reading from the N-terminus, the 616-residue chain is Adenylosuccinate synthetase 1 (616 aa).

Positions 1–27 are disordered; that stretch reads MDKQAERGQSAGPVKTPQGTQPPAHNY. Residues 17–27 show a composition bias toward polar residues; the sequence is PQGTQPPAHNY. Residues 87–93 and 117–119 contribute to the GTP site; these read GDEGKGK and GHT. Residue aspartate 88 is the Proton acceptor of the active site. Aspartate 88 and glycine 117 together coordinate Mg(2+). Residues 88 to 91, 115 to 118, threonine 202, lysine 216, glutamine 328, threonine 343, and lysine 472 contribute to the IMP site; these read DEGK and NAGH. Histidine 118 functions as the Proton donor in the catalytic mechanism. Substrate is bound at residue 468–474; sequence AVTKKPR. GTP-binding positions include arginine 474 and 603-605; that span reads GNG.

Belongs to the adenylosuccinate synthetase family. As to quaternary structure, homodimer. The cofactor is Mg(2+).

Its subcellular location is the cytoplasm. The enzyme catalyses IMP + L-aspartate + GTP = N(6)-(1,2-dicarboxyethyl)-AMP + GDP + phosphate + 2 H(+). It participates in purine metabolism; AMP biosynthesis via de novo pathway; AMP from IMP: step 1/2. Functionally, plays an important role in the salvage pathway for purine nucleotide biosynthesis. Catalyzes the first committed step in the biosynthesis of AMP from IMP. The chain is Adenylosuccinate synthetase 1 from Trypanosoma cruzi (strain CL Brener).